The chain runs to 125 residues: Small ribosomal subunit protein bS6 (125 aa).

Positions 96–125 (ETGASSMMKTVEREEARKASQAEFAAANER) are disordered. Basic and acidic residues predominate over residues 105–115 (TVEREEARKAS).

Belongs to the bacterial ribosomal protein bS6 family.

Binds together with bS18 to 16S ribosomal RNA. This is Small ribosomal subunit protein bS6 from Paracidovorax citrulli (strain AAC00-1) (Acidovorax citrulli).